We begin with the raw amino-acid sequence, 88 residues long: Small ribosomal subunit protein uS15c (88 aa).

Belongs to the universal ribosomal protein uS15 family. As to quaternary structure, part of the 30S ribosomal subunit.

It is found in the plastid. The protein resides in the chloroplast. In Pinus thunbergii (Japanese black pine), this protein is Small ribosomal subunit protein uS15c (rps15).